Here is a 149-residue protein sequence, read N- to C-terminus: Cytochrome c-type biogenesis protein CcmE (149 aa).

At 1-7 (MTRKQKR) the chain is on the cytoplasmic side. Residues 8–28 (LAVIAGGMGFIATAVLLVLFA) form a helical; Signal-anchor for type II membrane protein membrane-spanning segment. Topologically, residues 29–149 (FSQSVAYFYM…GVWKGEEASQ (121 aa)) are periplasmic. Positions 123 and 127 each coordinate heme.

The protein belongs to the CcmE/CycJ family.

The protein resides in the cell inner membrane. In terms of biological role, heme chaperone required for the biogenesis of c-type cytochromes. Transiently binds heme delivered by CcmC and transfers the heme to apo-cytochromes in a process facilitated by CcmF and CcmH. The polypeptide is Cytochrome c-type biogenesis protein CcmE (Rhizobium rhizogenes (strain K84 / ATCC BAA-868) (Agrobacterium radiobacter)).